A 648-amino-acid polypeptide reads, in one-letter code: MEHIQGAWKTISNGFGLKDAVFDGSSCISPTIVQQFGYQRRASDDGKLTDSSKTSNTIRVFLPNKQRTVVNVRNGMSLHDCLMKALKVRGLQPECCAVFRLLQEHKGKKARLDWNTDAASLIGEELQVDFLDHVPLTTHNFARKTFLKLAFCDICQKFLLNGFRCQTCGYKFHEHCSTKVPTMCVDWSNIRQLLLFPNSTASDSGVPAPPSFTMRRMRESVSRMPASSQHRYSTPHAFTFNTSSPSSEGSLSQRQRSTSTPNVHMVSTTLPVDSRMIEDAIRSHSESASPSALSSSPNNLSPTGWSQPKTPVPAQRERAPGSGTQEKNKIRPRGQRDSSYYWEIEASEVMLSTRIGSGSFGTVYKGKWHGDVAVKILKVVDPTPEQLQAFRNEVAVLRKTRHVNILLFMGYMTKDNLAIVTQWCEGSSLYKHLHVQETKFQMFQLIDIARQTAQGMDYLHAKNIIHRDMKSNNIFLHEGLTVKIGDFGLATVKSRWSGSQQVEQPTGSVLWMAPEVIRMQDNNPFSFQSDVYSYGIVLYELMTGELPYSHINNRDQIIFMVGRGYASPDLSRLYKNCPKAMKRLVADCVKKVKEERPLFPQILSSIELLQHSLPKINRSASEPSLHRAAHTEDINACTLTTSPRLPVF.

At S29 the chain carries Phosphoserine; by MAPK1. S43 carries the phosphoserine modification. In terms of domain architecture, RBD spans 56–131 (NTIRVFLPNK…IGEELQVDFL (76 aa)). The Phorbol-ester/DAG-type zinc finger occupies 138 to 184 (THNFARKTFLKLAFCDICQKFLLNGFRCQTCGYKFHEHCSTKVPTMC). Residues H139, C152, C155, C165, C168, H173, C176, and C184 each coordinate Zn(2+). A disordered region spans residues 217–335 (MRESVSRMPA…EKNKIRPRGQ (119 aa)). Position 233 is a phosphoserine; by PKA (S233). A compositionally biased stretch (polar residues) spans 239–271 (TFNTSSPSSEGSLSQRQRSTSTPNVHMVSTTLP). A phosphoserine mark is found at S252 and S259. T268 bears the Phosphothreonine; by autocatalysis mark. T269 carries the post-translational modification Phosphothreonine; by PKA. The span at 275–285 (RMIEDAIRSHS) shows a compositional bias: basic and acidic residues. Over residues 286 to 301 (ESASPSALSSSPNNLS) the composition is skewed to low complexity. A phosphoserine; by MAPK1 mark is found at S289, S296, and S301. Residues 331–349 (RPRGQRDSSYYWEIEASEV) form an interaction with PEBP1/RKIP region. S338 bears the Phosphoserine; by PAK1, PAK2, PAK3 and PAK5 mark. The residue at position 339 (S339) is a Phosphoserine; by PAK1, PAK2 and PAK3. Residues Y340 and Y341 each carry the phosphotyrosine; by SRC modification. One can recognise a Protein kinase domain in the interval 349 to 609 (VMLSTRIGSG…PQILSSIELL (261 aa)). ATP is bound by residues 355-363 (IGSGSFGTV) and K375. The Proton acceptor role is filled by D468. S471 carries the post-translational modification Phosphoserine. The residue at position 491 (T491) is a Phosphothreonine. The residue at position 494 (S494) is a Phosphoserine. Phosphoserine; by PKC occurs at positions 497 and 499. R563 is subject to Symmetric dimethylarginine; by PRMT5. A Phosphoserine modification is found at S621. S642 carries the post-translational modification Phosphoserine; by MAPK1.

It belongs to the protein kinase superfamily. TKL Ser/Thr protein kinase family. RAF subfamily. Monomer. Homodimer. Heterodimerizes with BRAF and this heterodimer possesses a highly increased kinase activity compared to the respective homodimers or monomers. Heterodimerization is mitogen-regulated and enhanced by 14-3-3 proteins. MAPK1/ERK2 activation can induce a negative feedback that promotes the dissociation of the heterodimer. Forms a multiprotein complex with Ras (M-Ras/MRAS), SHOC2 and protein phosphatase 1 (PPP1CA, PPP1CB and PPP1CC). Interacts with LZTR1. Interacts with Ras proteins; the interaction is antagonized by RIN1. Weakly interacts with RIT1. Interacts with STK3/MST2; the interaction inhibits its pro-apoptotic activity. Interacts (when phosphorylated at Ser-259) with YWHAZ (unphosphorylated at 'Thr-232'). Interacts with MAP3K5/ASF1 (via N-terminus) and this interaction inhibits the proapoptotic function of MAP3K5/ASK1. Interacts with PAK1 (via kinase domain). The phosphorylated form interacts with PIN1. The Ser-338 and Ser-339 phosphorylated form (by PAK1) interacts with BCL2. Interacts with PEBP1/RKIP and this interaction is enhanced if RAF1 is phosphorylated on residues Ser-338, Ser-339, Tyr-340 and Tyr-341. Interacts with ADCY2, ADCY5, ADCY6, DGKH, RCAN1/DSCR1, PPP1R12A, PKB/AKT1, PPP2CA, PPP2R1B, SPRY2, SPRY4, CNKSR1/CNK1, KSR2 and PHB/prohibitin. Interacts with ROCK2. Interacts (via N-terminus) with RGS14 (via RBD domains); the interaction mediates the formation of a ternary complex with BRAF, a ternary complex inhibited by GNAI1. Probably forms a complex composed of chaperones HSP90 and HSP70, co-chaperones CDC37, PPP5C, TSC1 and client protein TSC2, CDK4, AKT, RAF1 and NR3C1; this complex does not contain co-chaperones STIP1/HOP and PTGES3/p23. Interacts with MAP2K1/MEK1 and MAP2K2/MEK2. In its active form, interacts with PRMT5. Interacts with FAM83B; displaces 14-3-3 proteins from RAF1 and activates RAF1. Interacts with PDE8A; the interaction promotes RAF1 activity. Interacts with MFHAS1. Interacts with GLS. Interacts with YWHAZ. Interacts with NEK10 and MAP2K1; the interaction is direct with NEK10 and required for ERK1/2-signaling pathway activation in response to UV irradiation. Zn(2+) is required as a cofactor. In terms of processing, phosphorylation at Thr-269, Ser-338, Tyr-341, Thr-491 and Ser-494 results in its activation. Phosphorylation at Ser-29, Ser-43, Ser-289, Ser-296, Ser-301 and Ser-642 by MAPK1/ERK2 results in its inactivation. Phosphorylation at Ser-259 induces the interaction with YWHAZ and inactivates kinase activity. Dephosphorylation of Ser-259 by the SHOC2-MRAS-PP1c (SMP) complex consisting of SHOC2, GTP-bound M-Ras/MRAS and the catalytic subunit of protein phosphatase 1 (PPP1CA, PPP1CB or PPP1CC); this relieves inactivation and stimulates kinase activity. Phosphorylation at Ser-338 by PAK1 and PAK5 and Ser-339 by PAK1 is required for its mitochondrial localization. Phosphorylation at Ser-621 in response to growth factor treatment stabilizes the protein, possibly by preventing proteasomal degradation. Phosphorylation at Ser-289, Ser-296, Ser-301, Ser-338 and Ser-621 are somehow linked to the methylation potential of cells. Treatment of cells with HGF in the presence of the methylation inhibitor 5'-methylthioadenosine (MTA) results in increased phosphorylation at Ser-338 and Ser-621 and decreased phosphorylation at Ser-296, Ser-301 and Ser-338. Dephosphorylation at Ser-338 by PPP5C results in a decreased of activity. Methylated in response to EGF treatment. This modification leads to destabilization of the protein, possibly through proteasomal degradation.

It is found in the cytoplasm. Its subcellular location is the cell membrane. It localises to the mitochondrion. The protein localises to the nucleus. It carries out the reaction L-seryl-[protein] + ATP = O-phospho-L-seryl-[protein] + ADP + H(+). The catalysed reaction is L-threonyl-[protein] + ATP = O-phospho-L-threonyl-[protein] + ADP + H(+). Regulation is a highly complex process involving membrane recruitment, protein-protein interactions, dimerization, and phosphorylation/dephosphorylation events. Ras-GTP recruits RAF1 to the membrane, thereby promoting its activation. The inactive conformation of RAF1 is maintained by autoinhibitory interactions occurring between the N-terminal regulatory and the C-terminal catalytic domains and by the binding of a 14-3-3 protein that contacts two phosphorylation sites, Ser-259 and Ser-621. Upon mitogenic stimulation, Ras and PPP2R1A cooperate to release autoinhibition and the subsequent phosphorylation of activating sites: Ser-338, Tyr-341, Thr-491, and Ser-494, yields a fully active kinase. Through a negative feedback mechanism involving MAPK1/ERK2, RAF1 is phosphorylated on Ser-29, Ser-43, Ser-289, Ser-296, Ser-301 and Ser-642 by MAPK1/ERK2, which yields an inactive, desensitized kinase. The signaling-competent conformation of RAF1 is finally re-established by the coordinated action of PIN1, a prolyl isomerase that converts pSer and pThr residues from the cis to the trans conformation, which is preferentially recognized and dephosphorylated by PPP2R1A. Activated by homodimerization and heterodimerization (with BRAF). Also regulated through association with other proteins such as KSR2, CNKSR1/CNK1, PEBP1/RKIP, PHB/prohibitin and SPRY4. PEBP1/RKIP acts by dissociating RAF1 from its substrates MAP2K1/MEK1 and MAP2K2/MEK2. PHB/prohibitin facilitates the displacement of 14-3-3 from RAF1 by activated Ras, thereby promoting cell membrane localization and phosphorylation of RAF1 at the activating Ser-338. SPRY4 inhibits Ras-independent, but not Ras-dependent, activation of RAF1. CNKSR1/CNK1 regulates Src-mediated RAF1 activation. Serine/threonine-protein kinase that acts as a regulatory link between the membrane-associated Ras GTPases and the MAPK/ERK cascade, and this critical regulatory link functions as a switch determining cell fate decisions including proliferation, differentiation, apoptosis, survival and oncogenic transformation. RAF1 activation initiates a mitogen-activated protein kinase (MAPK) cascade that comprises a sequential phosphorylation of the dual-specific MAPK kinases (MAP2K1/MEK1 and MAP2K2/MEK2) and the extracellular signal-regulated kinases (MAPK3/ERK1 and MAPK1/ERK2). The phosphorylated form of RAF1 (on residues Ser-338 and Ser-339, by PAK1) phosphorylates BAD/Bcl2-antagonist of cell death at 'Ser-75'. Phosphorylates adenylyl cyclases: ADCY2, ADCY5 and ADCY6, resulting in their activation. Phosphorylates PPP1R12A resulting in inhibition of the phosphatase activity. Can promote NF-kB activation and inhibit signal transducers involved in motility (ROCK2), apoptosis (MAP3K5/ASK1 and STK3/MST2), proliferation and angiogenesis (RB1). Can protect cells from apoptosis also by translocating to the mitochondria where it binds BCL2 and displaces BAD/Bcl2-antagonist of cell death. Regulates Rho signaling and migration, and is required for normal wound healing. Plays a role in the oncogenic transformation of epithelial cells via repression of the TJ protein, occludin (OCLN) by inducing the up-regulation of a transcriptional repressor SNAI2/SLUG, which induces down-regulation of OCLN. Restricts caspase activation in response to selected stimuli, notably Fas stimulation, pathogen-mediated macrophage apoptosis, and erythroid differentiation. Phosphorylates TNNT2/cardiac muscle troponin T. This chain is RAF proto-oncogene serine/threonine-protein kinase (Raf1), found in Rattus norvegicus (Rat).